The following is a 137-amino-acid chain: Acidic phospholipase A2 VP8 (137 aa).

Positions 1 to 16 (MRILWIVAVCLIGVEG) are cleaved as a signal peptide. Intrachain disulfides connect Cys-41-Cys-130, Cys-43-Cys-59, Cys-58-Cys-110, Cys-64-Cys-137, Cys-65-Cys-103, Cys-72-Cys-96, and Cys-90-Cys-101. Residues Tyr-42, Gly-44, and Gly-46 each coordinate Ca(2+). His-62 is a catalytic residue. Asp-63 serves as a coordination point for Ca(2+). Asp-104 is an active-site residue.

Belongs to the phospholipase A2 family. Group II subfamily. D49 sub-subfamily. In terms of assembly, does not form a complex. Ca(2+) is required as a cofactor. In terms of tissue distribution, expressed by the venom gland.

It localises to the secreted. It catalyses the reaction a 1,2-diacyl-sn-glycero-3-phosphocholine + H2O = a 1-acyl-sn-glycero-3-phosphocholine + a fatty acid + H(+). Snake venom phospholipase A2 (PLA2) that is not toxic by itself, but the synergistical mixture of a basic and this acidic protein is lethal. PLA2 catalyzes the calcium-dependent hydrolysis of the 2-acyl groups in 3-sn-phosphoglycerides. The sequence is that of Acidic phospholipase A2 VP8 from Daboia palaestinae (Palestine viper).